The sequence spans 537 residues: Glutamyl-tRNA(Gln) amidotransferase subunit A, chloroplastic/mitochondrial (537 aa).

Active-site charge relay system residues include K116 and S191. The active-site Acyl-ester intermediate is the S215.

It belongs to the amidase family. GatA subfamily. In terms of assembly, subunit of the heterotrimeric GatCAB amidotransferase (AdT) complex, composed of A, B and C subunits.

It localises to the mitochondrion. It is found in the plastid. The protein resides in the chloroplast stroma. It carries out the reaction L-glutamyl-tRNA(Gln) + L-glutamine + ATP + H2O = L-glutaminyl-tRNA(Gln) + L-glutamate + ADP + phosphate + H(+). In terms of biological role, allows the formation of correctly charged Gln-tRNA(Gln) through the transamidation of misacylated Glu-tRNA(Gln) in chloroplasts and mitochondria. The reaction takes place in the presence of glutamine and ATP through an activated gamma-phospho-Glu-tRNA(Gln). This is Glutamyl-tRNA(Gln) amidotransferase subunit A, chloroplastic/mitochondrial from Arabidopsis thaliana (Mouse-ear cress).